The following is a 421-amino-acid chain: Large ribosomal subunit protein uL4 (421 aa).

Alanine 2 carries the N-acetylalanine modification. Lysine 14 carries the N6-acetyllysine modification. Arginine 97 is subject to Omega-N-methylarginine. Residue lysine 106 is modified to N6-acetyllysine. Lysine 239 is covalently cross-linked (Glycyl lysine isopeptide (Lys-Gly) (interchain with G-Cter in SUMO2)). N6-acetyllysine is present on lysine 259. At threonine 266 the chain carries Phosphothreonine. 2 positions are modified to phosphoserine: serine 290 and serine 295. Citrulline is present on arginine 300. Residue lysine 327 forms a Glycyl lysine isopeptide (Lys-Gly) (interchain with G-Cter in SUMO2) linkage. Lysine 333 and lysine 353 each carry N6-acetyllysine. Residue lysine 364 is modified to N6-acetyllysine; alternate. A Glycyl lysine isopeptide (Lys-Gly) (interchain with G-Cter in SUMO1); alternate cross-link involves residue lysine 364. At serine 365 the chain carries Phosphoserine. Basic and acidic residues predominate over residues 365–379 (SEKIVPEKGAGDKKP). The disordered stretch occupies residues 365–421 (SEKIVPEKGAGDKKPAVGKKGKKPVDAKKLKKPAGKKVVTKKPAEKKPTTEEKKSAA). Positions 393 to 404 (KLKKPAGKKVVT) are enriched in basic residues. Over residues 406–421 (KPAEKKPTTEEKKSAA) the composition is skewed to basic and acidic residues.

It belongs to the universal ribosomal protein uL4 family. Component of the large ribosomal subunit. May bind IPO9 with low affinity. Interacts with RBM3. In terms of processing, citrullinated by PADI4.

Its subcellular location is the cytoplasm. Its function is as follows. Component of the large ribosomal subunit. The ribosome is a large ribonucleoprotein complex responsible for the synthesis of proteins in the cell. The polypeptide is Large ribosomal subunit protein uL4 (Rpl4) (Rattus norvegicus (Rat)).